We begin with the raw amino-acid sequence, 458 residues long: MAAQGATAAVAATTSGIVGEGEPGPGENTSVEGPARSPGRVSPPTPARGEPEVTVEIGETYLCRRPDSTWHSAEVIQSRVNDQEGREEFYVHYVGFNRRLDEWVDKNRLALTKTVKDAVQKNSEKYLSELAEQPERKITRNQKRKHDEINHVQKTYAEMDPTTAALEKEHEAITKVKYVDKIHIGNYEIDAWYFSPFPEDYGKQPKLWLCEYCLKYMKFEKSYRFHLGQCQWRQPPGKEIYRKSNISVYEVDGKDHKIYCQNLCLLAKLFLDHKTLYFDVEPFVFYILTEVDRQGAHIVGYFSKEKESPDGNNVACILTLPPYQRRGYGKFLIAFSYELSKLESTVGSPEKPLSDLGKLSYRSYWSWVLLEILRDFRGTLSIKDLSQMTSITQNDIISTLQSLNMVKYWKGQHVICVTPKLVEEHLKSAQYKKPPITVDSVCLKWAPPKHKQVKLSKK.

Positions 1 to 14 (MAAQGATAAVAATT) are enriched in low complexity. Residues 1–52 (MAAQGATAAVAATTSGIVGEGEPGPGENTSVEGPARSPGRVSPPTPARGEPE) are disordered. Residue alanine 2 is modified to N-acetylalanine. Phosphoserine occurs at positions 37 and 42. Residues 55–110 (VEIGETYLCRRPDSTWHSAEVIQSRVNDQEGREEFYVHYVGFNRRLDEWVDKNRLA) form the Tudor-knot domain. Lysine 113 carries the N6-acetyllysine modification. The Nuclear localization signal signature appears at 140–149 (RNQKRKHDEI). In terms of domain architecture, MYST-type HAT spans 174-447 (TKVKYVDKIH…VDSVCLKWAP (274 aa)). A sufficient for interaction with KANSL1 region spans residues 174-458 (TKVKYVDKIH…KHKQVKLSKK (285 aa)). The C2HC MYST-type zinc finger occupies 207-232 (LWLCEYCLKYMKFEKSYRFHLGQCQW). Cysteine 210, cysteine 213, histidine 226, and cysteine 230 together coordinate Zn(2+). Position 274 is an N6-acetyllysine; by autocatalysis (lysine 274). Acetyl-CoA-binding residues include isoleucine 317, threonine 319, arginine 325, arginine 326, glycine 327, glycine 329, and lysine 330. At serine 348 the chain carries Phosphoserine. The Proton donor/acceptor role is filled by glutamate 350. Acetyl-CoA is bound by residues serine 354, serine 363, tyrosine 408, and lysine 432.

It belongs to the MYST (SAS/MOZ) family. Component of a multisubunit histone acetyltransferase complex (MSL) at least composed of the MOF/KAT8, MSL1/hampin, MSL2L1 and MSL3L1. Component of the NSL complex at least composed of MOF/KAT8, KANSL1, KANSL2, KANSL3, MCRS1, PHF20, OGT1/OGT, WDR5 and HCFC1. Component of some MLL1/MLL complex, at least composed of the core components KMT2A/MLL1, ASH2L, HCFC1, WDR5 and RBBP5, as well as the facultative components BACC1, CHD8, E2F6, HSP70, INO80C, KANSL1, LAS1L, MAX, MCRS1, MGA, MOF/KAT8, PELP1, PHF20, PRP31, RING2, RUVB1/TIP49A, RUVB2/TIP49B, SENP3, TAF1, TAF4, TAF6, TAF7, TAF9 and TEX10. Interacts with the chromodomain of MORF4L1/MRG15. Interacts with ATM (via its Tudor-knot domain); possibly regulating the activity of ATM. Interacts with NELFD. Acetylation at Lys-274 facilitates cognate substrate Lys-binding and acetylation. Although considered as an autoacetylation event, acetylation at Lys-274 probably takes place via a non-enzymatic process following acetyl-CoA-binding, which primes KAT8 for cognate protein-lysine acetylation. Deacetylated by SIRT1.

It localises to the nucleus. The protein resides in the chromosome. Its subcellular location is the mitochondrion. It catalyses the reaction L-lysyl-[histone] + acetyl-CoA = N(6)-acetyl-L-lysyl-[histone] + CoA + H(+). The catalysed reaction is L-lysyl-[protein] + acetyl-CoA = N(6)-acetyl-L-lysyl-[protein] + CoA + H(+). It carries out the reaction propanoyl-CoA + L-lysyl-[protein] = N(6)-propanoyl-L-lysyl-[protein] + CoA + H(+). Its activity is regulated as follows. The acetyltransferase activity is inhibited by anacardic acid derivatives. In terms of biological role, histone acetyltransferase that catalyzes histone H4 acetylation at 'Lys-5'- and 'Lys-8' (H4K5ac and H4K8ac) or 'Lys-16' (H4K16ac), depending on the context. Catalytic component of the MSL histone acetyltransferase complex, a multiprotein complex that mediates the majority of histone H4 acetylation at 'Lys-16' (H4K16ac), an epigenetic mark that prevents chromatin compaction. H4K16ac constitutes the only acetylation mark intergenerationally transmitted and regulates key biological processes, such as oogenesis, embryonic stem cell pluripotency, hematopoiesis or glucose metabolism. The MSL complex is required for chromosome stability and genome integrity by maintaining homeostatic levels of H4K16ac. The MSL complex is also involved in gene dosage by promoting up-regulation of genes expressed by the X chromosome. X up-regulation is required to compensate for autosomal biallelic expression. The MSL complex also participates in gene dosage compensation by promoting expression of Tsix non-coding RNA. As part of the NSL histone acetyltransferase complex, catalyzes histone H4 acetylation at 'Lys-5'- and 'Lys-8' (H4K5ac and H4K8ac) at transcription start sites and promotes transcription initiation. The NSL complex also acts as a regulator of gene expression in mitochondria: KAT8 associates with mitochondrial DNA and controls expression of respiratory genes in an acetyltransferase-dependent mechanism. Also functions as an acetyltransferase for non-histone targets, such as ALKBH5, COX17, IRF3, KDM1A/LSD1, LMNA, PAX7 or TP53/p53. Acts as an inhibitor of antiviral immunity by acetylating IRF3, preventing IRF3 recruitment to promoters. Acts as a regulator of asymmetric division in muscle stem cells by mediating acetylation of PAX7. As part of the NSL complex, acetylates TP53/p53 at 'Lys-120'. Acts as a regulator of epithelial-to-mesenchymal transition as part of the NSL complex by mediating acetylation of KDM1A/LSD1. The NSL complex is required for nuclear architecture maintenance by mediating acetylation of LMNA. Promotes mitochondrial integrity by catalyzing acetylation of COX17. In addition to protein acetyltransferase activity, able to mediate protein propionylation. The protein is Histone acetyltransferase KAT8 (Kat8) of Rattus norvegicus (Rat).